Consider the following 101-residue polypeptide: Small ribosomal subunit protein uS14 (101 aa).

It belongs to the universal ribosomal protein uS14 family. As to quaternary structure, part of the 30S ribosomal subunit. Contacts proteins S3 and S10.

Functionally, binds 16S rRNA, required for the assembly of 30S particles and may also be responsible for determining the conformation of the 16S rRNA at the A site. The sequence is that of Small ribosomal subunit protein uS14 from Buchnera aphidicola subsp. Baizongia pistaciae (strain Bp).